Reading from the N-terminus, the 134-residue chain is Profilin-2 (134 aa).

Residues Cys13 and Cys118 are joined by a disulfide bond. The short motif at Ala84–Thr100 is the Involved in PIP2 interaction element. Position 114 is a phosphothreonine (Thr114).

Belongs to the profilin family. Occurs in many kinds of cells as a complex with monomeric actin in a 1:1 ratio. Phosphorylated by MAP kinases.

The protein localises to the cytoplasm. It is found in the cytoskeleton. Functionally, binds to actin and affects the structure of the cytoskeleton. At high concentrations, profilin prevents the polymerization of actin, whereas it enhances it at low concentrations. The chain is Profilin-2 from Olea europaea (Common olive).